The primary structure comprises 392 residues: Formate-dependent phosphoribosylglycinamide formyltransferase (392 aa).

Residues 22–23 (EL) and E82 contribute to the N(1)-(5-phospho-beta-D-ribosyl)glycinamide site. ATP-binding positions include R114, K155, 160–165 (SSGKGQ), 195–198 (EGVV), and E203. One can recognise an ATP-grasp domain in the interval 119-308 (RLAAEELQLP…EFALHVRAFL (190 aa)). Mg(2+) contacts are provided by E267 and E279. N(1)-(5-phospho-beta-D-ribosyl)glycinamide-binding positions include D286, K355, and 362-363 (RR).

It belongs to the PurK/PurT family. In terms of assembly, homodimer.

It catalyses the reaction N(1)-(5-phospho-beta-D-ribosyl)glycinamide + formate + ATP = N(2)-formyl-N(1)-(5-phospho-beta-D-ribosyl)glycinamide + ADP + phosphate + H(+). Its pathway is purine metabolism; IMP biosynthesis via de novo pathway; N(2)-formyl-N(1)-(5-phospho-D-ribosyl)glycinamide from N(1)-(5-phospho-D-ribosyl)glycinamide (formate route): step 1/1. Involved in the de novo purine biosynthesis. Catalyzes the transfer of formate to 5-phospho-ribosyl-glycinamide (GAR), producing 5-phospho-ribosyl-N-formylglycinamide (FGAR). Formate is provided by PurU via hydrolysis of 10-formyl-tetrahydrofolate. This Shigella sonnei (strain Ss046) protein is Formate-dependent phosphoribosylglycinamide formyltransferase.